A 180-amino-acid chain; its full sequence is UPF0340 protein RBAM_034070 (180 aa).

This sequence belongs to the UPF0340 family.

This chain is UPF0340 protein RBAM_034070, found in Bacillus velezensis (strain DSM 23117 / BGSC 10A6 / LMG 26770 / FZB42) (Bacillus amyloliquefaciens subsp. plantarum).